A 360-amino-acid polypeptide reads, in one-letter code: Photosystem II protein D1 3 (360 aa).

3 helical membrane passes run 29-46, 118-133, and 142-156; these read YVGW…TAAI, HFLI…QWEL, and WIPV…AATA. A chlorophyll a-binding site is contributed by H118. Y126 serves as a coordination point for pheophytin a. Residues D170 and E189 each coordinate [CaMn4O5] cluster. A helical membrane pass occupies residues 197–218; it reads FHMIGVAGVFGGALFSAMHGSL. Residue H198 coordinates chlorophyll a. Residues H215 and 264–265 each bind a quinone; that span reads SF. H215 lines the Fe cation pocket. H272 is a Fe cation binding site. Residues 274–288 traverse the membrane as a helical segment; that stretch reads FLAAWPVIGIWFAAL. H332, E333, D342, and A344 together coordinate [CaMn4O5] cluster. Positions 345–360 are excised as a propeptide; it reads SGEVQPIALTAPAIAS.

The protein belongs to the reaction center PufL/M/PsbA/D family. PSII is composed of 1 copy each of membrane proteins PsbA, PsbB, PsbC, PsbD, PsbE, PsbF, PsbH, PsbI, PsbJ, PsbK, PsbL, PsbM, PsbT, PsbX, PsbY, PsbZ, Psb30/Ycf12, peripheral proteins PsbO, CyanoQ (PsbQ), PsbU, PsbV and a large number of cofactors. It forms dimeric complexes. The D1/D2 heterodimer binds P680, chlorophylls that are the primary electron donor of PSII, and subsequent electron acceptors. It shares a non-heme iron and each subunit binds pheophytin, quinone, additional chlorophylls, carotenoids and lipids. D1 provides most of the ligands for the Mn4-Ca-O5 cluster of the oxygen-evolving complex (OEC). There is also a Cl(-1) ion associated with D1 and D2, which is required for oxygen evolution. The PSII complex binds additional chlorophylls, carotenoids and specific lipids. serves as cofactor. In terms of processing, tyr-161 forms a radical intermediate that is referred to as redox-active TyrZ, YZ or Y-Z. C-terminally processed by CtpA; processing is essential to allow assembly of the oxygen-evolving complex and thus photosynthetic growth.

The protein localises to the cellular thylakoid membrane. It carries out the reaction 2 a plastoquinone + 4 hnu + 2 H2O = 2 a plastoquinol + O2. Functionally, photosystem II (PSII) is a light-driven water:plastoquinone oxidoreductase that uses light energy to abstract electrons from H(2)O, generating O(2) and a proton gradient subsequently used for ATP formation. It consists of a core antenna complex that captures photons, and an electron transfer chain that converts photonic excitation into a charge separation. The D1/D2 (PsbA/PsbD) reaction center heterodimer binds P680, the primary electron donor of PSII as well as several subsequent electron acceptors. The protein is Photosystem II protein D1 3 of Nostoc sp. (strain PCC 7120 / SAG 25.82 / UTEX 2576).